The primary structure comprises 472 residues: Lycopene beta cyclase, chloroplastic (472 aa).

The N-terminal 25 residues, 1–25 (MDALLTSPFIPLKKPSHNRKSNTTT), are a transit peptide targeting the chloroplast. The segment at 1–27 (MDALLTSPFIPLKKPSHNRKSNTTTAS) is disordered. An NAD(+)-binding site is contributed by 62 to 90 (LAVVGGGPAGLAVAKRVSDAGLSVCSIDP).

This sequence belongs to the lycopene cyclase family. As to expression, expressed in flower buds and lips. Detected in roots and leaves.

It localises to the plastid. It is found in the chloroplast. It catalyses the reaction a carotenoid psi-end group = a carotenoid beta-end derivative. Its pathway is carotenoid biosynthesis; beta-carotene biosynthesis. It functions in the pathway carotenoid biosynthesis; beta-zeacarotene biosynthesis. In terms of biological role, catalyzes the double cyclization reaction which converts lycopene to beta-carotene and neurosporene to beta-zeacarotene. In Oncidium hybrid cultivar (Orchid), this protein is Lycopene beta cyclase, chloroplastic (LCY-B).